Reading from the N-terminus, the 354-residue chain is Stimulator of interferon genes protein 3 (354 aa).

4 consecutive transmembrane segments (helical) span residues 20-40, 48-68, 101-121, and 132-152; these read VTFA…FALW, INFV…GELI, YGSC…YALL, and YGIF…IVGI. 3',3'-cGAMP-binding residues include N178, Y183, R250, I251, K253, E272, S275, and N276.

Belongs to the STING family.

The protein localises to the membrane. Facilitator of innate immune signaling that acts as a sensor of second messenger signals produced by cyclic GMP-AMP synthase-like receptors (cGLRs) and promotes the production of type I interferon. Innate immune response is triggered in response to nucleotides from viruses and bacteria delivered to the cytoplasm. Acts by binding cyclic dinucleotides: recognizes and binds cyclic 3'-3' linked cGAMP (3'-3'-cGAMP), cyclic di-AMP (3',3'-c-di-AMP) and cyclic di-GMP (3',3'-c-di-GMP) second messengers produced by cGLRs in response to nucleotides in the cytosol, such as double-stranded RNA (dsRNA). Upon binding to 3'-3'-cGAMP, 3',3'-c-di-AMP or 3',3'-c-di-GMP, oligomerizes and promotes the recruitment and subsequent activation of the transcription factor IRF3 to induce expression of type I interferon. In Stylophora pistillata (Smooth cauliflower coral), this protein is Stimulator of interferon genes protein 3.